The chain runs to 248 residues: Sperm-specific protein Don juan (248 aa).

Residues 82–147 (KEGNQDELEN…EKKTKCAKKD (66 aa)) adopt a coiled-coil conformation. Residues 146 to 200 (KDPCKKKDPCKKKDPCKKKDPCKKKDPCKKKDPCKKKDPCKKKDPCKKKGGDLKK) form a disordered region. 8 repeat units span residues 147 to 152 (DPCKKK), 153 to 158 (DPCKKK), 159 to 164 (DPCKKK), 165 to 170 (DPCKKK), 171 to 176 (DPCKKK), 177 to 182 (DPCKKK), 183 to 188 (DPCKKK), and 189 to 194 (DPCKKK). The 8 X 6 AA tandem repeat of D-P-C-K-K-K stretch occupies residues 147-194 (DPCKKKDPCKKKDPCKKKDPCKKKDPCKKKDPCKKKDPCKKKDPCKKK). The stretch at 197 to 244 (DLKKKCKKLAEKEKCKKLAKKEKMKKLQKKCKKMAQKEKCKKMAKKDK) forms a coiled coil.

In terms of tissue distribution, expression limited to post-meiotic male germ cells. Expressed in elongated spermatids during individualization and in finally elongated nuclei of spermatids. After completion of nuclear shaping it is no longer expressed in the sperm heads with the onset of individualization.

The protein resides in the nucleus. The protein localises to the mitochondrion. In terms of biological role, may be involved in the final steps of mitochondrial differentiation within the flagellum. The sequence is that of Sperm-specific protein Don juan (dj) from Drosophila melanogaster (Fruit fly).